The following is a 340-amino-acid chain: Glycerol-3-phosphate dehydrogenase [NAD(P)+] (340 aa).

The NADPH site is built by S11, W12, R33, and K106. 3 residues coordinate sn-glycerol 3-phosphate: K106, G137, and S139. A141 is an NADPH binding site. 5 residues coordinate sn-glycerol 3-phosphate: K192, D245, S255, R256, and N257. Residue K192 is the Proton acceptor of the active site. R256 provides a ligand contact to NADPH. NADPH-binding residues include V280 and E282.

The protein belongs to the NAD-dependent glycerol-3-phosphate dehydrogenase family.

The protein localises to the cytoplasm. It carries out the reaction sn-glycerol 3-phosphate + NAD(+) = dihydroxyacetone phosphate + NADH + H(+). The catalysed reaction is sn-glycerol 3-phosphate + NADP(+) = dihydroxyacetone phosphate + NADPH + H(+). It participates in membrane lipid metabolism; glycerophospholipid metabolism. Functionally, catalyzes the reduction of the glycolytic intermediate dihydroxyacetone phosphate (DHAP) to sn-glycerol 3-phosphate (G3P), the key precursor for phospholipid synthesis. This is Glycerol-3-phosphate dehydrogenase [NAD(P)+] from Bacillus cereus (strain 03BB102).